We begin with the raw amino-acid sequence, 131 residues long: uncharacterized protein (131 aa).

Residues 4–44 (QKPEQDVNKKIEELEKKVQELQEQLEKTKQAVKTVASILDN) adopt a coiled-coil conformation.

This is an uncharacterized protein from Sulfolobus islandicus filamentous virus (isolate Iceland/Hveragerdi) (SIFV).